The primary structure comprises 222 residues: Ribosomal RNA large subunit methyltransferase E (222 aa).

G64, W66, D92, D108, and D133 together coordinate S-adenosyl-L-methionine. Catalysis depends on K173, which acts as the Proton acceptor.

This sequence belongs to the class I-like SAM-binding methyltransferase superfamily. RNA methyltransferase RlmE family.

It localises to the cytoplasm. The enzyme catalyses uridine(2552) in 23S rRNA + S-adenosyl-L-methionine = 2'-O-methyluridine(2552) in 23S rRNA + S-adenosyl-L-homocysteine + H(+). Its function is as follows. Specifically methylates the uridine in position 2552 of 23S rRNA at the 2'-O position of the ribose in the fully assembled 50S ribosomal subunit. The chain is Ribosomal RNA large subunit methyltransferase E from Variovorax paradoxus (strain S110).